We begin with the raw amino-acid sequence, 405 residues long: MVCRNVSRQQFRAIMIITSLLDTDLYKFSMMQVVLHHFPAAQVEYRYKCRTPGINLRPYLDEIRAEVHELCQLRFTSEELDYLRGLRFIKSDFVDFLGLFHLPERCIFIGEGEQPGEISITVKGPWLHTILFEIPVLAIVNEVYFRNTRRNPDWEEGRKRLQSKMNLVLDDPALADFRVAEYGTRRRFSKVWHEEIVSTMKARMGVHFAGTSNVLLAMRHGVLPLGTMGHEYLQACQALGPRLRDSQVFALEVWAKEYRGDLGIALSDVYGMDAFLRDFDMYFCKLFDGARHDSGDPFVWGERLLEHYRTNRADPRAKTLVFSDSLTFPRAIELARQFAGRCKVSFGIGTNLTNDLGHEPLQIVMKMVRCNGQPVAKVSDAPEKTMCDDPAYLAYLRQVFQLPPA.

Phosphohistidine; by autocatalysis is present on H230.

It belongs to the NAPRTase family. Transiently phosphorylated on a His residue during the reaction cycle. Phosphorylation strongly increases the affinity for substrates and increases the rate of nicotinate D-ribonucleotide production. Dephosphorylation regenerates the low-affinity form of the enzyme, leading to product release.

The catalysed reaction is nicotinate + 5-phospho-alpha-D-ribose 1-diphosphate + ATP + H2O = nicotinate beta-D-ribonucleotide + ADP + phosphate + diphosphate. It participates in cofactor biosynthesis; NAD(+) biosynthesis; nicotinate D-ribonucleotide from nicotinate: step 1/1. Catalyzes the synthesis of beta-nicotinate D-ribonucleotide from nicotinate and 5-phospho-D-ribose 1-phosphate at the expense of ATP. The protein is Nicotinate phosphoribosyltransferase of Bordetella pertussis (strain Tohama I / ATCC BAA-589 / NCTC 13251).